The chain runs to 386 residues: WD repeat-containing protein 89 (386 aa).

WD repeat units follow at residues 21–65 (KEPT…LLRE), 68–107 (GSPGLLNGVRFANSCDNVYSASTDGTVKCWDARLASEKPA), 112–156 (GYPS…QDLS), 167–207 (THSD…EEDA), 213–253 (NSVS…TDEP), and 318–357 (GHAATVRSFCWTVSEDSLLTGGEDAQLLLWKPGAVEKTFT).

This Rattus norvegicus (Rat) protein is WD repeat-containing protein 89 (Wdr89).